Reading from the N-terminus, the 564-residue chain is Efflux pump DEP3 (564 aa).

Polar residues predominate over residues 1 to 12; it reads MVYSSTSSSQNR. The segment at 1-48 is disordered; that stretch reads MVYSSTSSSQNRPDGEKHVEAVGSSTRIPSDELVDRGGGDTTTGKQSP. A compositionally biased stretch (basic and acidic residues) spans 29–38; the sequence is PSDELVDRGG. The next 14 helical transmembrane spans lie at 65–85, 91–111, 122–142, 152–172, 185–205, 212–232, 255–275, 281–301, 332–352, 362–382, 386–406, 423–443, 452–472, and 528–548; these read STTLLFALDNTIVANIQPAII, LELLSWIGTGFALGTMFILLW, WVYIFNIFLFEAGSALCGAAP, VIAGVGGSGMYSGTLTYVSVL, STVVWGIGSVLGPVVGGAFAA, WGFYVNLPIGAAFAPVYFLLF, AVIFLAGSACLTVVLTFGGVV, GTVIALWTVTGILLVAFIVLL, FLSSGIILAMTYYVPLYFQFI, VRLLPLIMFMVVASMVNGFLM, GLIPIWYIGGSSLALIGTALM, ILIGAGTGSYIVAGFAIVQSL, AVGAMTIFQDLGMVLFLAISG, and TIWAFFLAAAALSVVCSFPLL.

Belongs to the major facilitator superfamily. TCR/Tet family.

It is found in the cell membrane. Its function is as follows. Efflux pump; part of the gene cluster that mediates the biosynthesis of depudecin, a highly oxidized eleven-carbon linear polyketide that acts as a histone deacetylase (HDAC) inhibitor and makes a small contribution to pathogenesis. Is presumed either to be responsible for exporting depudecin, to provide self-protection, or both. In Alternaria brassicicola (Dark leaf spot agent), this protein is Efflux pump DEP3.